We begin with the raw amino-acid sequence, 151 residues long: FAD synthase (151 aa).

ATP is bound by residues 21–22 (TF), 26–29 (HPGH), and D104.

Belongs to the archaeal FAD synthase family. Homodimer. It depends on a divalent metal cation as a cofactor.

It carries out the reaction FMN + ATP + H(+) = FAD + diphosphate. The protein operates within cofactor biosynthesis; FAD biosynthesis; FAD from FMN: step 1/1. Functionally, catalyzes the transfer of the AMP portion of ATP to flavin mononucleotide (FMN) to produce flavin adenine dinucleotide (FAD) coenzyme. The polypeptide is FAD synthase (Methanosarcina acetivorans (strain ATCC 35395 / DSM 2834 / JCM 12185 / C2A)).